The primary structure comprises 60 residues: UI (60 aa).

The span at 1 to 14 shows a compositional bias: low complexity; that stretch reads AAAAGDSAASDLLG. Positions 1-22 are disordered; it reads AAAAGDSAASDLLGDNILRSED. Valine 60 carries the valine amide modification.

Belongs to the sauvagine/corticotropin-releasing factor/urotensin I family.

It is found in the secreted. Its function is as follows. Urotensin is found in the teleost caudal neurosecretory system. It has a suggested role in osmoregulation and as a corticotropin-releasing factor. The non-hormonal portion of this precursor may be a urotensin binding protein, urophysin. The chain is UI from Platichthys flesus (European flounder).